Consider the following 305-residue polypeptide: Aspartate carbamoyltransferase catalytic subunit (305 aa).

R51 and T52 together coordinate carbamoyl phosphate. K79 is an L-aspartate binding site. Carbamoyl phosphate is bound by residues R101, H130, and Q133. R163 and R215 together coordinate L-aspartate. 2 residues coordinate carbamoyl phosphate: G256 and P257.

The protein belongs to the aspartate/ornithine carbamoyltransferase superfamily. ATCase family. As to quaternary structure, heterododecamer (2C3:3R2) of six catalytic PyrB chains organized as two trimers (C3), and six regulatory PyrI chains organized as three dimers (R2).

The catalysed reaction is carbamoyl phosphate + L-aspartate = N-carbamoyl-L-aspartate + phosphate + H(+). It functions in the pathway pyrimidine metabolism; UMP biosynthesis via de novo pathway; (S)-dihydroorotate from bicarbonate: step 2/3. In terms of biological role, catalyzes the condensation of carbamoyl phosphate and aspartate to form carbamoyl aspartate and inorganic phosphate, the committed step in the de novo pyrimidine nucleotide biosynthesis pathway. This chain is Aspartate carbamoyltransferase catalytic subunit, found in Ehrlichia canis (strain Jake).